Here is a 726-residue protein sequence, read N- to C-terminus: Catalase-peroxidase (726 aa).

Polar residues predominate over residues 1-12 (MSTPSDQHNTLS). Residues 1-34 (MSTPSDQHNTLSAGKCPFHQGNSNQTAGGGTSSR) are disordered. A cross-link (tryptophyl-tyrosyl-methioninium (Trp-Tyr) (with M-252)) is located at residues 105–226 (WHSAGTYRSA…LGATEMGLIY (122 aa)). His-106 functions as the Proton acceptor in the catalytic mechanism. The tryptophyl-tyrosyl-methioninium (Tyr-Met) (with W-105) cross-link spans 226 to 252 (YVNPEGPNHSGDPASAAPAIRATFGNM). Residue His-267 participates in heme b binding.

The protein belongs to the peroxidase family. Peroxidase/catalase subfamily. Homodimer or homotetramer. The cofactor is heme b. Post-translationally, formation of the three residue Trp-Tyr-Met cross-link is important for the catalase, but not the peroxidase activity of the enzyme.

The catalysed reaction is H2O2 + AH2 = A + 2 H2O. It carries out the reaction 2 H2O2 = O2 + 2 H2O. Bifunctional enzyme with both catalase and broad-spectrum peroxidase activity. The polypeptide is Catalase-peroxidase (Cronobacter sakazakii (strain ATCC BAA-894) (Enterobacter sakazakii)).